The sequence spans 514 residues: Contact site A protein (514 aa).

An N-terminal signal peptide occupies residues 1–19 (MKFLLVLIILYNILNSAHS). The interval 20 to 453 (APTITAVSNG…EATTSTTYTI (434 aa)) is globular. An IPT/TIG 1 domain is found at 21–104 (PTITAVSNGK…TGGNGLFKYT (84 aa)). Residues asparagine 128, asparagine 137, asparagine 207, asparagine 294, and asparagine 399 are each glycosylated (N-linked (GlcNAc...) asparagine). The IPT/TIG 2 domain occupies 191-283 (PTITSITPLA…NQQPITFTYN (93 aa)). 2 stretches are compositionally biased toward low complexity: residues 446–475 (TTST…TATP) and 483–494 (STPEETEAPSSA). Residues 446–494 (TTSTTYTIPDTPTPTDTATPSPTPTETATPSPTPKPTSTPEETEAPSSA) are disordered. 2 repeat units span residues 462-469 (TATPSPTP) and 472-479 (TATPSPTP). The interval 462-479 (TATPSPTPTETATPSPTP) is 2 X 8 AA repeats, Pro-rich. The GPI-like-anchor amidated serine moiety is linked to residue serine 492. Residues 493-514 (SATTLISPLSLIVIFISFVLLI) constitute a propeptide, removed in mature form.

Phosphorylated on serine and N-glycosylated with two types of oligosaccharide chains. In terms of processing, the GPI-like-anchor contains a phosphoceramide group, rather than a phosphatidyl group.

The protein resides in the cell membrane. In terms of biological role, this cell-surface glycoprotein mediates cell-cell binding via homophilic interaction. The sequence is that of Contact site A protein (csaA) from Dictyostelium discoideum (Social amoeba).